Here is a 199-residue protein sequence, read N- to C-terminus: MQYPEPISKLIDSYMKLPGIGSKTATRLAFYTIDMQEDDVTEFAQSLISAKRDLSYCSICGNITESDPCMICADKSRDNSKVVVVEQPKDVMSLERMNEYHGLYHVLHGVLSPIEGKGPEDINIASLLRRLQKNEAIKEVIIATNATPEGEATAMYIARLVKPANIKVTRLAHGLAVGSDIEYADEMTLFKAIEGRQEI.

The C4-type zinc-finger motif lies at 57–72 (CSICGNITESDPCMIC). Residues 80-176 (SKVVVVEQPK…KVTRLAHGLA (97 aa)) form the Toprim domain.

This sequence belongs to the RecR family.

Functionally, may play a role in DNA repair. It seems to be involved in an RecBC-independent recombinational process of DNA repair. It may act with RecF and RecO. The chain is Recombination protein RecR from Ligilactobacillus salivarius (strain UCC118) (Lactobacillus salivarius).